The following is a 312-amino-acid chain: Malate dehydrogenase 1 (312 aa).

Residues 11–16 (GAGQIG) and Asp-35 each bind NAD(+). The substrate site is built by Arg-86 and Arg-92. Residues Asn-99 and 122-124 (ITN) each bind NAD(+). Positions 124 and 155 each coordinate substrate. The active-site Proton acceptor is His-179.

Belongs to the LDH/MDH superfamily. MDH type 3 family.

It catalyses the reaction (S)-malate + NAD(+) = oxaloacetate + NADH + H(+). Functionally, catalyzes the reversible oxidation of malate to oxaloacetate. The chain is Malate dehydrogenase 1 from Anaeromyxobacter dehalogenans (strain 2CP-C).